Here is a 445-residue protein sequence, read N- to C-terminus: Probable D-serine dehydratase (445 aa).

Lysine 119 bears the N6-(pyridoxal phosphate)lysine mark.

This sequence belongs to the serine/threonine dehydratase family. DsdA subfamily. Pyridoxal 5'-phosphate is required as a cofactor.

The catalysed reaction is D-serine = pyruvate + NH4(+). The polypeptide is Probable D-serine dehydratase (Pseudomonas putida (strain GB-1)).